A 583-amino-acid chain; its full sequence is MLO-like protein 6 (583 aa).

At 1–15 (MADQVKEKTLEETST) the chain is on the extracellular side. The helical transmembrane segment at 16–36 (WAVAVVCFVLLLISIVIEKLI) threads the bilayer. Topologically, residues 37–61 (HKIGSWFKKKNKKALYEALEKVKAE) are cytoplasmic. The helical transmembrane segment at 62–82 (LMLMGFISLLLTIGQGYISNI) threads the bilayer. Topologically, residues 83–161 (CIPKNIAASM…VSAYGMHQLH (79 aa)) are extracellular. A helical transmembrane segment spans residues 162–182 (IFIFVLAVCHVIYCIVTYALG). The Cytoplasmic segment spans residues 183–284 (KTKMRRWKKW…KYIQRSLEED (102 aa)). A helical membrane pass occupies residues 285-305 (FKTIVEINPVIWFIAVLFLLT). Residues 306-314 (NTNGLNSYL) lie on the Extracellular side of the membrane. Residues 315 to 335 (WLPFIPFIVILIVGTKLQVII) form a helical membrane-spanning segment. At 336-368 (TKLGLRIQEKGDVVKGTPLVQPGDHFFWFGRPR) the chain is on the cytoplasmic side. A helical membrane pass occupies residues 369-389 (FILFLIHLVLFTNAFQLAFFV). Topologically, residues 390–411 (WSTYEFGLKNCFHESRVDVIIR) are extracellular. A helical transmembrane segment spans residues 412 to 432 (ISIGLLVQILCSYVTLPLYAL). The Cytoplasmic segment spans residues 433–583 (VTQMGSKMKP…ISLRDFSFKR (151 aa)). The segment at 447–468 (ERVATALKSWHHTAKKNIKHGR) is calmodulin-binding. Residues 461–583 (KKNIKHGRTS…ISLRDFSFKR (123 aa)) are disordered. Residues 470 to 484 (SESTTPFSSRPTTPT) show a composition bias toward low complexity. The segment covering 541–551 (RFGEEESEKKF) has biased composition (basic and acidic residues).

This sequence belongs to the MLO family.

It is found in the membrane. In terms of biological role, may be involved in modulation of pathogen defense and leaf cell death. Activity seems to be regulated by Ca(2+)-dependent calmodulin binding and seems not to require heterotrimeric G proteins. This chain is MLO-like protein 6 (MLO6), found in Arabidopsis thaliana (Mouse-ear cress).